Reading from the N-terminus, the 450-residue chain is Bifunctional protein GlmU (450 aa).

The pyrophosphorylase stretch occupies residues 1–226 (MLAVAVLAAG…ADEVNGINNR (226 aa)). UDP-N-acetyl-alpha-D-glucosamine contacts are provided by residues 7-10 (LAAG), lysine 21, glutamine 73, and 78-79 (GT). Position 103 (aspartate 103) interacts with Mg(2+). 4 residues coordinate UDP-N-acetyl-alpha-D-glucosamine: glycine 140, glutamate 155, asparagine 170, and asparagine 224. Asparagine 224 lines the Mg(2+) pocket. Positions 227–247 (RQLAQCEALLQQRLRHHWMDE) are linker. Residues 248–450 (GVTFIDPESC…TKEGWAERKV (203 aa)) are N-acetyltransferase. Arginine 329 and lysine 347 together coordinate UDP-N-acetyl-alpha-D-glucosamine. Histidine 359 (proton acceptor) is an active-site residue. 2 residues coordinate UDP-N-acetyl-alpha-D-glucosamine: tyrosine 362 and asparagine 373. Residues alanine 376, 382–383 (NY), alanine 419, and arginine 436 contribute to the acetyl-CoA site.

The protein in the N-terminal section; belongs to the N-acetylglucosamine-1-phosphate uridyltransferase family. This sequence in the C-terminal section; belongs to the transferase hexapeptide repeat family. In terms of assembly, homotrimer. It depends on Mg(2+) as a cofactor.

Its subcellular location is the cytoplasm. It catalyses the reaction alpha-D-glucosamine 1-phosphate + acetyl-CoA = N-acetyl-alpha-D-glucosamine 1-phosphate + CoA + H(+). The catalysed reaction is N-acetyl-alpha-D-glucosamine 1-phosphate + UTP + H(+) = UDP-N-acetyl-alpha-D-glucosamine + diphosphate. It participates in nucleotide-sugar biosynthesis; UDP-N-acetyl-alpha-D-glucosamine biosynthesis; N-acetyl-alpha-D-glucosamine 1-phosphate from alpha-D-glucosamine 6-phosphate (route II): step 2/2. The protein operates within nucleotide-sugar biosynthesis; UDP-N-acetyl-alpha-D-glucosamine biosynthesis; UDP-N-acetyl-alpha-D-glucosamine from N-acetyl-alpha-D-glucosamine 1-phosphate: step 1/1. It functions in the pathway bacterial outer membrane biogenesis; LPS lipid A biosynthesis. Functionally, catalyzes the last two sequential reactions in the de novo biosynthetic pathway for UDP-N-acetylglucosamine (UDP-GlcNAc). The C-terminal domain catalyzes the transfer of acetyl group from acetyl coenzyme A to glucosamine-1-phosphate (GlcN-1-P) to produce N-acetylglucosamine-1-phosphate (GlcNAc-1-P), which is converted into UDP-GlcNAc by the transfer of uridine 5-monophosphate (from uridine 5-triphosphate), a reaction catalyzed by the N-terminal domain. In Synechococcus sp. (strain CC9605), this protein is Bifunctional protein GlmU.